Here is a 158-residue protein sequence, read N- to C-terminus: MIKYPMTVQGARALEEELTHLTKVIRPKLSQDIGTARELGDLKENAEYHAAREQQGMVEARIRDIEGRMQNAVVIDVTTIAHTGKVIFGTTVEIANVETDESVVYQIVGEDEADIKKGKISVGSPIARALIAKEEGDVVVVKTPSGVIEYEIIEVRHI.

It belongs to the GreA/GreB family.

Its function is as follows. Necessary for efficient RNA polymerase transcription elongation past template-encoded arresting sites. The arresting sites in DNA have the property of trapping a certain fraction of elongating RNA polymerases that pass through, resulting in locked ternary complexes. Cleavage of the nascent transcript by cleavage factors such as GreA or GreB allows the resumption of elongation from the new 3'terminus. GreA releases sequences of 2 to 3 nucleotides. In Pseudomonas syringae pv. tomato (strain ATCC BAA-871 / DC3000), this protein is Transcription elongation factor GreA.